A 320-amino-acid polypeptide reads, in one-letter code: Zinc finger protein 330 (320 aa).

Residues M1–R23 form a disordered region. Positions K3–K11 match the Nuclear localization signal motif. Positions K10–L22 are enriched in basic and acidic residues. 4 consecutive C4-type zinc fingers follow at residues C42–C58, C67–C104, C129–C149, and C175–C189. Disordered stretches follow at residues E206 to Y250 and G264 to N303. Residues C216–D225 show a composition bias toward basic and acidic residues. The span at D269 to G287 shows a compositional bias: acidic residues. Position 291 is a phosphoserine (S291).

It belongs to the NOA36 family.

It is found in the nucleus. It localises to the nucleolus. Its subcellular location is the chromosome. The protein resides in the centromere. The sequence is that of Zinc finger protein 330 (ZNF330) from Bos taurus (Bovine).